Here is a 496-residue protein sequence, read N- to C-terminus: 3-octaprenyl-4-hydroxybenzoate carboxy-lyase (496 aa).

Mn(2+) is bound at residue Asn181. Prenylated FMN-binding positions include 184 to 186, 198 to 200, and 203 to 204; these read IYR, RWL, and RG. Glu247 provides a ligand contact to Mn(2+). The active-site Proton donor is Asp296.

Belongs to the UbiD family. As to quaternary structure, homohexamer. It depends on prenylated FMN as a cofactor. Mn(2+) serves as cofactor.

The protein localises to the cell membrane. The enzyme catalyses a 4-hydroxy-3-(all-trans-polyprenyl)benzoate + H(+) = a 2-(all-trans-polyprenyl)phenol + CO2. The protein operates within cofactor biosynthesis; ubiquinone biosynthesis. Catalyzes the decarboxylation of 3-octaprenyl-4-hydroxy benzoate to 2-octaprenylphenol, an intermediate step in ubiquinone biosynthesis. In Azoarcus sp. (strain BH72), this protein is 3-octaprenyl-4-hydroxybenzoate carboxy-lyase.